A 341-amino-acid polypeptide reads, in one-letter code: KH domain-containing RNA-binding protein QKI (341 aa).

Residues 11 to 82 (PKPTPDYLMQ…PDAVGPIVQL (72 aa)) are qua1 domain; involved in homodimerization. Residues 87–153 (YVPVKEYPDF…WEHLNEDLHV (67 aa)) form the KH domain. Residues 182–213 (AAEGEDSLKKMQLMELAILNGTYRDANIKSPA) are qua2 domain; involved in RNA binding. S188 is subject to Phosphoserine. At R227 the chain carries Omega-N-methylarginine. Asymmetric dimethylarginine; by CARM1; alternate is present on R242. R242 is subject to Omega-N-methylarginine; alternate. R256 bears the Omega-N-methylarginine mark. The SH3-binding signature appears at 276-279 (PPGP). The Nuclear localization signal signature appears at 324-330 (RVHPYQR).

Belongs to the quaking family. As to quaternary structure, homodimer; does not require RNA to homodimerize. Able to heterodimerize with BICC1. Methylated by PRMT1. In terms of processing, tyrosine phosphorylated at its C-terminus, probably by FYN. Phosphorylation leads to decreased mRNA-binding affinity, affecting transport and/or stabilization of MBP mRNA. Post-translationally, ubiquitinated by RNF6 in macrophages, leading to its degradation.

The protein resides in the nucleus. It is found in the cytoplasm. RNA reader protein, which recognizes and binds specific RNAs, thereby regulating RNA metabolic processes, such as pre-mRNA splicing, circular RNA (circRNA) formation, mRNA export, mRNA stability and/or translation. Involved in various cellular processes, such as mRNA storage into stress granules, apoptosis, lipid deposition, interferon response, glial cell fate and development. Binds to the 5'-NACUAAY-N(1,20)-UAAY-3' RNA core sequence. Acts as a mRNA modification reader that specifically recognizes and binds mRNA transcripts modified by internal N(7)-methylguanine (m7G). Promotes the formation of circular RNAs (circRNAs) during the epithelial to mesenchymal transition and in cardiomyocytes: acts by binding to sites flanking circRNA-forming exons. CircRNAs are produced by back-splicing circularization of pre-mRNAs. Plays a central role in myelinization via 3 distinct mechanisms. First, acts by protecting and promoting stability of target mRNAs such as MBP, SIRT2 and CDKN1B, which promotes oligodendrocyte differentiation. Second, participates in mRNA transport by regulating the nuclear export of MBP mRNA. Finally, indirectly regulates mRNA splicing of MAG pre-mRNA during oligodendrocyte differentiation by acting as a negative regulator of MAG exon 12 alternative splicing: acts by binding to HNRNPA1 mRNA splicing factor, preventing its translation. Involved in microglia differentiation and remyelination by regulating microexon alternative splicing of the Rho GTPase pathway. Involved in macrophage differentiation: promotes monocyte differentiation by regulating pre-mRNA splicing in naive peripheral blood monocytes. Acts as an important regulator of muscle development: required for the contractile function of cardiomyocytes by regulating alternative splicing of cardiomyocyte transcripts. Acts as a negative regulator of thermogenesis by decreasing stability, nuclear export and translation of mRNAs encoding PPARGC1A and UCP1. Also required for visceral endoderm function and blood vessel development. May also play a role in smooth muscle development. In addition to its RNA-binding activity, also acts as a nuclear transcription coactivator for SREBF2/SREBP2. The sequence is that of KH domain-containing RNA-binding protein QKI from Bos taurus (Bovine).